The sequence spans 411 residues: Serine hydroxymethyltransferase (411 aa).

120–122 (GHL) contacts (6S)-5,6,7,8-tetrahydrofolate. Lys-225 carries the N6-(pyridoxal phosphate)lysine modification. Residue 350 to 352 (SPF) participates in (6S)-5,6,7,8-tetrahydrofolate binding.

It belongs to the SHMT family. In terms of assembly, homodimer. Requires pyridoxal 5'-phosphate as cofactor.

It is found in the cytoplasm. It catalyses the reaction (6R)-5,10-methylene-5,6,7,8-tetrahydrofolate + glycine + H2O = (6S)-5,6,7,8-tetrahydrofolate + L-serine. The protein operates within one-carbon metabolism; tetrahydrofolate interconversion. Its pathway is amino-acid biosynthesis; glycine biosynthesis; glycine from L-serine: step 1/1. Its function is as follows. Catalyzes the reversible interconversion of serine and glycine with tetrahydrofolate (THF) serving as the one-carbon carrier. This reaction serves as the major source of one-carbon groups required for the biosynthesis of purines, thymidylate, methionine, and other important biomolecules. Also exhibits THF-independent aldolase activity toward beta-hydroxyamino acids, producing glycine and aldehydes, via a retro-aldol mechanism. The protein is Serine hydroxymethyltransferase of Limosilactobacillus reuteri (strain DSM 20016) (Lactobacillus reuteri).